Here is a 923-residue protein sequence, read N- to C-terminus: Inorganic phosphate transporter PHO87 (923 aa).

Residues 1 to 334 (MRFSHFLKYN…HMNTRQELIE (334 aa)) form the SPX domain. Residues 1–461 (MRFSHFLKYN…KLFFGKRAMK (461 aa)) are Extracellular-facing. 2 disordered regions span residues 40–74 (ETPT…SSSK) and 86–107 (FGSK…IDGN). Basic and acidic residues predominate over residues 95–104 (KRGDSDEKAI). Lysine 102 is covalently cross-linked (Glycyl lysine isopeptide (Lys-Gly) (interchain with G-Cter in ubiquitin)). 3 N-linked (GlcNAc...) asparagine glycosylation sites follow: asparagine 162, asparagine 202, and asparagine 274. The helical transmembrane segment at 462–482 (IGFIIIVTGVLLGVKTFNDPV) threads the bilayer. Over 483–493 (EHRCMALVECC) the chain is Cytoplasmic. Residues 494-514 (AFLWASEAIPLHITGLLVPLL) traverse the membrane as a helical segment. The Extracellular segment spans residues 515–537 (TVLFRVLKDDDGKVMGAAAASTE). The chain crosses the membrane as a helical span at residues 538–558 (ILGTMWSSTIMILLAGFTLGE). Residues 559–583 (ALSQYNVAKVLASWLLALAGTKPRN) lie on the Cytoplasmic side of the membrane. The helical transmembrane segment at 584–604 (VLLMAMSVVFFLSMWISNVAS) threads the bilayer. The Extracellular segment spans residues 605–627 (PVLTYSLLTPLLDPLDYTSPFAK). The chain crosses the membrane as a helical span at residues 628 to 648 (ALVMGVALSADIGGMASPISS). Over 649-667 (PQNIISMQYLKPYGIGWGQ) the chain is Cytoplasmic. The chain crosses the membrane as a helical span at residues 668–688 (FFAVALPTGILSMLCSWALMI). Residues 689 to 707 (LTFKIGKTKLEKFKPIRTR) are Extracellular-facing. Residues 708–728 (FTIKQYFIIIVTIATILLWCV) traverse the membrane as a helical segment. Topologically, residues 729-735 (ESQIESA) are cytoplasmic. A helical transmembrane segment spans residues 736–756 (FGSSGEIAVIPIVLFFGTGLL). At 757–767 (STKDFNTFPWS) the chain is on the extracellular side. A helical membrane pass occupies residues 768-788 (IVVLAMGGIALGKAVSSSGLL). Residues 789-802 (VTIARALQKKIQND) are Cytoplasmic-facing. Residues 803–823 (GVFAILCIFGILMLVVGTFVS) traverse the membrane as a helical segment. The Extracellular portion of the chain corresponds to 824 to 849 (HTVSAIIIIPLVQEVGDKLSDPKAAP). A helical membrane pass occupies residues 850-870 (ILVFGCALLASCGMGLASSGF). At 871 to 898 (PNVTAISMTDKKGNRWLTVGAFISRGVP) the chain is on the cytoplasmic side. The chain crosses the membrane as a helical span at residues 899 to 919 (ASLLAFVCVITLGYGISSSVL). Residues 920–923 (KGST) lie on the Extracellular side of the membrane.

This sequence belongs to the CitM (TC 2.A.11) transporter family.

It is found in the membrane. Its function is as follows. Involved in the uptake of inorganic phosphate. The sequence is that of Inorganic phosphate transporter PHO87 (PHO87) from Saccharomyces cerevisiae (strain ATCC 204508 / S288c) (Baker's yeast).